We begin with the raw amino-acid sequence, 111 residues long: Probable 4-amino-4-deoxy-L-arabinose-phosphoundecaprenol flippase subunit ArnE (111 aa).

A run of 3 helical transmembrane segments spans residues Leu-38–Leu-58, Leu-61–Ala-81, and Pro-91–Ala-111. The EamA domain maps to Leu-40–Ser-109.

Belongs to the ArnE family. As to quaternary structure, heterodimer of ArnE and ArnF.

It localises to the cell inner membrane. The protein operates within bacterial outer membrane biogenesis; lipopolysaccharide biosynthesis. Functionally, translocates 4-amino-4-deoxy-L-arabinose-phosphoundecaprenol (alpha-L-Ara4N-phosphoundecaprenol) from the cytoplasmic to the periplasmic side of the inner membrane. This chain is Probable 4-amino-4-deoxy-L-arabinose-phosphoundecaprenol flippase subunit ArnE, found in Salmonella paratyphi B (strain ATCC BAA-1250 / SPB7).